The sequence spans 264 residues: NAD-capped RNA hydrolase NudC (264 aa).

Arg70 serves as a coordination point for substrate. Positions 99 and 102 each coordinate Zn(2+). Glu112 is a substrate binding site. Zn(2+)-binding residues include Cys117 and Cys120. Tyr125 contributes to the substrate binding site. A Nudix hydrolase domain is found at 126–253 (PVICPSIIVA…TIARKLIHVT (128 aa)). A divalent metal cation-binding residues include Ala162, Glu178, and Glu182. Positions 163–184 (GFVEVGETFEQAVQREVFEETG) match the Nudix box motif. 196–203 (QPWAFPNS) provides a ligand contact to substrate. Position 223 (Glu223) interacts with a divalent metal cation. Ala246 contributes to the substrate binding site.

The protein belongs to the Nudix hydrolase family. NudC subfamily. As to quaternary structure, homodimer. It depends on Mg(2+) as a cofactor. Mn(2+) is required as a cofactor. The cofactor is Zn(2+).

The enzyme catalyses a 5'-end NAD(+)-phospho-ribonucleoside in mRNA + H2O = a 5'-end phospho-adenosine-phospho-ribonucleoside in mRNA + beta-nicotinamide D-ribonucleotide + 2 H(+). It carries out the reaction NAD(+) + H2O = beta-nicotinamide D-ribonucleotide + AMP + 2 H(+). It catalyses the reaction NADH + H2O = reduced beta-nicotinamide D-ribonucleotide + AMP + 2 H(+). In terms of biological role, mRNA decapping enzyme that specifically removes the nicotinamide adenine dinucleotide (NAD) cap from a subset of mRNAs by hydrolyzing the diphosphate linkage to produce nicotinamide mononucleotide (NMN) and 5' monophosphate mRNA. The NAD-cap is present at the 5'-end of some mRNAs and stabilizes RNA against 5'-processing. Has preference for mRNAs with a 5'-end purine. Catalyzes the hydrolysis of a broad range of dinucleotide pyrophosphates. This Haemophilus influenzae (strain 86-028NP) protein is NAD-capped RNA hydrolase NudC.